Here is a 639-residue protein sequence, read N- to C-terminus: Extracellular metalloproteinase 9 (639 aa).

The signal sequence occupies residues M1–G19. Residues H20–D250 constitute a propeptide that is removed on maturation. Residue N278 is glycosylated (N-linked (GlcNAc...) asparagine). Positions P293–Y312 are disordered. Residue H434 coordinates Zn(2+). Residue E435 is part of the active site. H438 serves as a coordination point for Zn(2+).

It belongs to the peptidase M36 family. Zn(2+) is required as a cofactor.

Its subcellular location is the secreted. Its function is as follows. Secreted metalloproteinase that allows assimilation of proteinaceous substrates and probably acts as a virulence factor. In Coccidioides posadasii (strain C735) (Valley fever fungus), this protein is Extracellular metalloproteinase 9 (MEP9).